A 157-amino-acid polypeptide reads, in one-letter code: 2-C-methyl-D-erythritol 2,4-cyclodiphosphate synthase (157 aa).

D8 and H10 together coordinate a divalent metal cation. 4-CDP-2-C-methyl-D-erythritol 2-phosphate-binding positions include 8 to 10 (DVH) and 34 to 35 (HS). H42 serves as a coordination point for a divalent metal cation. 4-CDP-2-C-methyl-D-erythritol 2-phosphate is bound by residues 56 to 58 (DIG), 61 to 65 (FPDTD), 132 to 135 (TTEE), and F139.

Belongs to the IspF family. Homotrimer. The cofactor is a divalent metal cation.

The enzyme catalyses 4-CDP-2-C-methyl-D-erythritol 2-phosphate = 2-C-methyl-D-erythritol 2,4-cyclic diphosphate + CMP. It functions in the pathway isoprenoid biosynthesis; isopentenyl diphosphate biosynthesis via DXP pathway; isopentenyl diphosphate from 1-deoxy-D-xylulose 5-phosphate: step 4/6. Involved in the biosynthesis of isopentenyl diphosphate (IPP) and dimethylallyl diphosphate (DMAPP), two major building blocks of isoprenoid compounds. Catalyzes the conversion of 4-diphosphocytidyl-2-C-methyl-D-erythritol 2-phosphate (CDP-ME2P) to 2-C-methyl-D-erythritol 2,4-cyclodiphosphate (ME-CPP) with a corresponding release of cytidine 5-monophosphate (CMP). The protein is 2-C-methyl-D-erythritol 2,4-cyclodiphosphate synthase of Clostridium botulinum (strain Alaska E43 / Type E3).